We begin with the raw amino-acid sequence, 314 residues long: MKKGINRVVLVGTGAVGCSYAYSMINQGVAEEFVLVDVNEAKAEGEAMDLSHAVPFSPSPTKVWSGSYADCKDADLVVITAGLPQKPGETRLDLVEKNTKIFKQIVRGIMDSGFDGIFLIATNPVDILTYVTWKESGLPKERVIGSGTTLDSARFRYMLGDYLDVDPRNVHAYIVGEHGDTELPVWSHATIGVQKLETILANNEQYKQEDLDKIFENVRDAAYHIIERKGATYYGIGMSLLRVTKAILNNENSVLTVSAYLEGQYGEKDAYVGVPAVINREGVREIVELELNEEEKAKFAHSVKVLKETMAPVL.

NAD(+)-binding positions include Val16, Asp37, Lys42, Tyr68, and 82 to 83 (GL). Substrate-binding positions include Gln85, Arg91, and 123-126 (NPVD). NAD(+) is bound by residues 121-123 (ATN) and Ser146. 151 to 154 (DSAR) is a substrate binding site. The beta-D-fructose 1,6-bisphosphate site is built by Arg156 and His171. Catalysis depends on His178, which acts as the Proton acceptor. Phosphotyrosine is present on Tyr223. Substrate is bound at residue Thr232.

This sequence belongs to the LDH/MDH superfamily. LDH family. As to quaternary structure, homotetramer.

The protein resides in the cytoplasm. The catalysed reaction is (S)-lactate + NAD(+) = pyruvate + NADH + H(+). Its pathway is fermentation; pyruvate fermentation to lactate; (S)-lactate from pyruvate: step 1/1. Its activity is regulated as follows. Allosterically activated by fructose 1,6-bisphosphate (FBP). Its function is as follows. Catalyzes the conversion of lactate to pyruvate. This chain is L-lactate dehydrogenase 2, found in Bacillus anthracis.